The chain runs to 57 residues: Amyloid-beta precursor protein (57 aa).

Over 1 to 33 (SEVKMDAEFRHDSGYEVHHQKLVFFAEDVGSNK) the chain is Extracellular. 4 residues coordinate Cu(2+): H11, Y15, H18, and H19. Zn(2+) is bound by residues H11, Y15, H18, and H19. Residues 34-57 (GAIIGLMVGGVVIATVIVITLVML) form a helical membrane-spanning segment.

This sequence belongs to the APP family. In terms of assembly, binds, via its C-terminus, to the PID domain of several cytoplasmic proteins, including APBB family members, the APBA family, MAPK8IP1, SHC1 and NUMB and DAB1. Binding to DAB1 inhibits its serine phosphorylation. Interacts (via NPXY motif) with DAB2 (via PID domain); the interaction is impaired by tyrosine phosphorylation of the NPXY motif. Also interacts with GPCR-like protein BPP, APPBP1, IB1, KNS2 (via its TPR domains), APPBP2 (via BaSS) and DDB1. In vitro, it binds MAPT via the MT-binding domains. Associates with microtubules in the presence of ATP and in a kinesin-dependent manner. Interacts, through a C-terminal domain, with GNAO1. Interacts with CPEB1, ANKS1B, TNFRSF21 and AGER. Interacts with ITM2B. Interacts with ITM2C. Interacts with IDE. Can form homodimers; dimerization is enhanced in the presence of Cu(2+) ions. Can form homodimers; this is promoted by heparin binding. Interacts with SORL1 (via N-terminal ectodomain); this interaction retains APP in the trans-Golgi network and reduces processing into soluble APP-alpha and amyloid-beta peptides. Interacts with PLD3. Interacts with VDAC1. Interacts with NSG1; could regulate APP processing. Amyloid-beta protein 42 interacts with FPR2. Interacts with LRRK2. Interacts (via cytoplasmic domain) with KIF5B. Interacts (via C-terminus) with APBB2/FE65L1 (via C-terminus). Interacts (via intracellular domain) with APBB3. In terms of processing, proteolytically processed under normal cellular conditions. Cleavage either by alpha-secretase, beta-secretase or theta-secretase leads to generation and extracellular release of soluble APP peptides, S-APP-alpha and S-APP-beta, and the retention of corresponding membrane-anchored C-terminal fragments, C80, C83 and C99. Subsequent processing of C80 and C83 by gamma-secretase yields P3 peptides. This is the major secretory pathway and is non-amyloidogenic. Alternatively, presenilin/nicastrin-mediated gamma-secretase processing of C99 releases the amyloid-beta proteins, amyloid-beta protein 40 and amyloid-beta protein 42, major components of amyloid plaques, and the cytotoxic C-terminal fragments, gamma-CTF(50), gamma-CTF(57) and gamma-CTF(59). PSEN1 cleavage is more efficient with C83 than with C99 as substrate (in vitro). Amyloid-beta protein 40 and Amyloid-beta protein 42 are cleaved by ACE. Many other minor amyloid-beta peptides, amyloid-beta 1-X peptides, are found in cerebral spinal fluid (CSF) including the amyloid-beta X-15 peptides, produced from the cleavage by alpha-secretase.

It localises to the cell membrane. The protein localises to the membrane. Its subcellular location is the perikaryon. It is found in the cell projection. The protein resides in the growth cone. It localises to the clathrin-coated pit. The protein localises to the early endosome. Its subcellular location is the cytoplasmic vesicle. It is found in the secreted. The protein resides in the cell surface. It localises to the nucleus. The protein localises to the cytoplasm. Functionally, functions as a cell surface receptor and performs physiological functions on the surface of neurons relevant to neurite growth, neuronal adhesion and axonogenesis. Interaction between APP molecules on neighboring cells promotes synaptogenesis. Involved in cell mobility and transcription regulation through protein-protein interactions. Can promote transcription activation through binding to APBB1-KAT5 and inhibit Notch signaling through interaction with Numb. Couples to apoptosis-inducing pathways such as those mediated by G(o) and JIP. Inhibits G(o)-alpha ATPase activity. Acts as a kinesin I membrane receptor, mediating the axonal transport of beta-secretase and presenilin 1. By acting as a kinesin I membrane receptor, plays a role in axonal anterograde transport of cargo towards synapses in axons. May be involved in copper homeostasis/oxidative stress through copper ion reduction. In vitro, copper-metallated APP induces neuronal death directly or is potentiated through Cu(2+)-mediated low-density lipoprotein oxidation. Can regulate neurite outgrowth through binding to components of the extracellular matrix such as heparin and collagen I and IV. Induces a AGER-dependent pathway that involves activation of p38 MAPK, resulting in internalization of amyloid-beta peptide and mitochondrial dysfunction in cultured cortical neurons. Provides Cu(2+) ions for GPC1 which are required for release of nitric oxide (NO) and subsequent degradation of the heparan sulfate chains on GPC1. This Ursus maritimus (Polar bear) protein is Amyloid-beta precursor protein (APP).